The primary structure comprises 344 residues: Anthranilate phosphoribosyltransferase (344 aa).

Residues Gly-81, 84–85 (GD), Ser-89, 91–94 (NIST), 109–117 (KHGNRALSS), and Ala-121 each bind 5-phospho-alpha-D-ribose 1-diphosphate. An anthranilate-binding site is contributed by Gly-81. Ser-93 serves as a coordination point for Mg(2+). Asn-112 is a binding site for anthranilate. Arg-167 is an anthranilate binding site. Residues Asp-226 and Glu-227 each contribute to the Mg(2+) site.

Belongs to the anthranilate phosphoribosyltransferase family. As to quaternary structure, homodimer. Mg(2+) serves as cofactor.

The enzyme catalyses N-(5-phospho-beta-D-ribosyl)anthranilate + diphosphate = 5-phospho-alpha-D-ribose 1-diphosphate + anthranilate. It participates in amino-acid biosynthesis; L-tryptophan biosynthesis; L-tryptophan from chorismate: step 2/5. Catalyzes the transfer of the phosphoribosyl group of 5-phosphorylribose-1-pyrophosphate (PRPP) to anthranilate to yield N-(5'-phosphoribosyl)-anthranilate (PRA). In Xanthobacter autotrophicus (strain ATCC BAA-1158 / Py2), this protein is Anthranilate phosphoribosyltransferase.